The following is a 191-amino-acid chain: Probable DNA-directed RNA polymerase subunit delta (191 aa).

One can recognise an HTH HARE-type domain in the interval 14–83 (LSMIEVARAI…GENKWGLRSW (70 aa)). The segment at 118–191 (DEDAIDYRDD…EDEEDEEPVL (74 aa)) is disordered.

The protein belongs to the RpoE family. As to quaternary structure, RNAP is composed of a core of 2 alpha, a beta and a beta' subunits. The core is associated with a delta subunit and one of several sigma factors.

Participates in both the initiation and recycling phases of transcription. In the presence of the delta subunit, RNAP displays an increased specificity of transcription, a decreased affinity for nucleic acids, and an increased efficiency of RNA synthesis because of enhanced recycling. The chain is Probable DNA-directed RNA polymerase subunit delta from Streptococcus pyogenes serotype M18 (strain MGAS8232).